The chain runs to 411 residues: Protein Rv3035 (411 aa).

This is Protein Rv3035 from Mycobacterium tuberculosis (strain ATCC 25618 / H37Rv).